The chain runs to 438 residues: Aflatoxin cluster transcriptional coactivator aflS (438 aa).

One can recognise an HTH iclR-type domain in the interval 65–134 (LALYNQLLAC…PSPGHVAHSV (70 aa)). A DNA-binding region (H-T-H motif) is located at residues 95–114 (FEDVADIAGVPECRLRRLVR).

As to quaternary structure, interacts with aflR.

It localises to the nucleus. It is found in the endosome. In terms of biological role, transcription coactivator involved in regulation of the aflatoxin biosynthesis gene cluster with aflR. The ratio of the expression data between aflS:aflR plays a crucial role in the regulation of aflatoxins production. A high ratio, produced at a range between 17 and 30 degrees Celsius, corresponds with the production profile of aflatoxin G1 biosynthesis. A low ratio, produced over 30 degrees Celsius, is related to aflatoxin B1 biosynthesis. AflJ may act in aflR transport to or from the nucleus, thus controlling the availability of aflR for transcriptional activation of aflatoxin biosynthesis cluster genes. AflJ may also assist in directing endosomes to the cytoplasmic membrane for aflatoxin export. This is Aflatoxin cluster transcriptional coactivator aflS from Aspergillus parasiticus (strain ATCC 56775 / NRRL 5862 / SRRC 143 / SU-1).